A 399-amino-acid chain; its full sequence is Acetate kinase (399 aa).

Asparagine 10 is a binding site for Mg(2+). Lysine 17 is a binding site for ATP. Arginine 91 provides a ligand contact to substrate. Aspartate 148 functions as the Proton donor/acceptor in the catalytic mechanism. ATP is bound by residues 208-212, 283-285, and 331-335; these read HLGNG, DCR, and GIGEN. Glutamate 385 contacts Mg(2+).

It belongs to the acetokinase family. In terms of assembly, homodimer. Mg(2+) is required as a cofactor. The cofactor is Mn(2+).

It is found in the cytoplasm. It catalyses the reaction acetate + ATP = acetyl phosphate + ADP. It functions in the pathway metabolic intermediate biosynthesis; acetyl-CoA biosynthesis; acetyl-CoA from acetate: step 1/2. In terms of biological role, catalyzes the formation of acetyl phosphate from acetate and ATP. Can also catalyze the reverse reaction. The protein is Acetate kinase of Shewanella sp. (strain ANA-3).